Consider the following 962-residue polypeptide: Activity-dependent neuroprotective protein 2a (962 aa).

A C2H2-type 1 zinc finger spans residues 75–98; sequence LCCSLCWYSSRSVPTFRSHIHRCH. The segment at 108 to 130 adopts a C2H2-type 2; degenerate zinc-finger fold; that stretch reads LMCPYCPFVSSPKVTEQHIQFFH. The C2H2-type 3; degenerate zinc-finger motif lies at 165–188; sequence YTCATCGYHDSLLYVMKKHVLVNH. A C2H2-type 4 zinc finger spans residues 219 to 244; the sequence is YHCKLCKLPAETIEHLLYHILSSEKH. The C2H2-type 5; degenerate zinc-finger motif lies at 527–547; that stretch reads VKCLRCKILLTEQGIFQHLLH. C2H2-type zinc fingers lie at residues 549 to 572 and 650 to 673; these read LKCLFCPQMFYSFKQIMEHSKKEH and NACPFCQVKLQNPEDYELHLQTKH. The C2H2-type 8; degenerate zinc-finger motif lies at 688 to 712; sequence YKCIYCFGVYTEKSTPKTISIHVQR. The interval 753–781 is disordered; sequence QGAPEFPKPKKEAVTPRNRRRNTKASKTG. Positions 795-854 form a DNA-binding region, homeobox; it reads PMGMERTSFEDRKDFLSQYFHRKPYVTKTEIELLASRLWINKADVKAHFNSKLTKCLKAI.

It localises to the nucleus. Its function is as follows. May be involved in transcriptional regulation. Required for progression through late erythroid differentiation. May be involved in vasculogenesis. This Danio rerio (Zebrafish) protein is Activity-dependent neuroprotective protein 2a.